The chain runs to 353 residues: Phospho-N-acetylmuramoyl-pentapeptide-transferase (353 aa).

A run of 10 helical transmembrane segments spans residues 22-42 (FAFFIALCLSLFLMPKFITWA), 65-85 (TPTMGGLIFISSAVIASLFCI), 88-108 (DNIFAISALLCLILFCLIGLI), 129-149 (LLAQIIAGLICILPLYFSSEL), 161-181 (PLFDMEIFAIVFWILVLISSS), 192-212 (GLATVPSIFSLSTLGIFLYLS), 228-248 (GLGEVVIICAALIGALMGFLW), 256-276 (VFMGDSGSLALGGFIGFLAII), 281-301 (ILLLLIGFVFVLETVSVILQV), and 330-350 (KIIVRFWMIALLSNLLALASI).

Belongs to the glycosyltransferase 4 family. MraY subfamily. Mg(2+) serves as cofactor.

It localises to the cell inner membrane. It carries out the reaction UDP-N-acetyl-alpha-D-muramoyl-L-alanyl-gamma-D-glutamyl-meso-2,6-diaminopimeloyl-D-alanyl-D-alanine + di-trans,octa-cis-undecaprenyl phosphate = di-trans,octa-cis-undecaprenyl diphospho-N-acetyl-alpha-D-muramoyl-L-alanyl-D-glutamyl-meso-2,6-diaminopimeloyl-D-alanyl-D-alanine + UMP. The protein operates within cell wall biogenesis; peptidoglycan biosynthesis. Catalyzes the initial step of the lipid cycle reactions in the biosynthesis of the cell wall peptidoglycan: transfers peptidoglycan precursor phospho-MurNAc-pentapeptide from UDP-MurNAc-pentapeptide onto the lipid carrier undecaprenyl phosphate, yielding undecaprenyl-pyrophosphoryl-MurNAc-pentapeptide, known as lipid I. This is Phospho-N-acetylmuramoyl-pentapeptide-transferase from Campylobacter jejuni subsp. jejuni serotype O:6 (strain 81116 / NCTC 11828).